We begin with the raw amino-acid sequence, 241 residues long: Endothelial protein C receptor (241 aa).

The N-terminal stretch at 1-20 (MLTKFLSLLLLLLLLGCAFC) is a signal peptide. Over 21–213 (NSDGSQSLHM…GSQTGRSYTS (193 aa)) the chain is Extracellular. Residues N47, N64, N139, N165, and N175 are each glycosylated (N-linked (GlcNAc...) asparagine). Residues 214-234 (LVLGILMGCFIIAGVAVGIFL) form a helical membrane-spanning segment. Over 235-241 (CTGGRRC) the chain is Cytoplasmic.

The protein resides in the membrane. Functionally, binds activated protein C. Enhances protein C activation by the thrombin-thrombomodulin complex; plays a role in the protein C pathway controlling blood coagulation. This chain is Endothelial protein C receptor (Procr), found in Rattus norvegicus (Rat).